We begin with the raw amino-acid sequence, 136 residues long: Interleukin-13 (136 aa).

The first 18 residues, 1 to 18, serve as a signal peptide directing secretion; it reads MALWLTVVIAFTCIGGLA. N-linked (GlcNAc...) asparagine glycosylation is found at Asn38, Asn49, Asn57, Asn72, Asn75, and Asn131. Disulfide bonds link Cys48/Cys76 and Cys64/Cys90.

Belongs to the IL-4/IL-13 family. In terms of assembly, interacts with IL13RA2.

The protein localises to the secreted. Its function is as follows. Cytokine that plays important roles in allergic inflammation and immune response to parasite infection. Synergizes with IL2 in regulating interferon-gamma synthesis. Stimulates B-cell proliferation, and activation of eosinophils, basophils, and mast cells. Plays an important role in controlling IL33 activity by modulating the production of transmembrane and soluble forms of interleukin-1 receptor-like 1/IL1RL1. Displays the capacity to antagonize Th1-driven proinflammatory immune response and downregulates synthesis of many proinflammatory cytokines including IL1, IL6, IL10, IL12 and TNF-alpha through a mechanism that partially involves suppression of NF-kappa-B. Also functions on nonhematopoietic cells, including endothelial cells where it induces vascular cell adhesion protein 1/VCAM1, which is important in the recruitment of eosinophils. Exerts its biological effects through its receptors which comprises the IL4R chain and the IL13RA1 chain, to activate JAK1 and TYK2, leading to the activation of STAT6. Aside from IL13RA1, another receptor IL13RA2 acts as a high affinity decoy for IL13 and mediates internalization and depletion of extracellular IL13. The protein is Interleukin-13 (IL13) of Camelus bactrianus (Bactrian camel).